A 510-amino-acid chain; its full sequence is NAD(P)H-quinone oxidoreductase subunit 2 B, chloroplastic (510 aa).

13 consecutive transmembrane segments (helical) span residues 24–44 (LLLF…GLIL), 59–79 (WFYF…LFRW), 99–119 (IFQF…VEYI), 124–144 (MAIT…MFLC), 149–169 (LITI…LSGY), 184–204 (LLMG…LYGL), 229–249 (ISIA…LAPF), 262–284 (TPVV…TRIF), 295–315 (WHLL…LIAI), 323–343 (MLAY…IVGD), 354–374 (YMLF…LFGL), 395–415 (ALSL…AGFF), and 418–438 (LHLF…IGLL).

This sequence belongs to the complex I subunit 2 family. In terms of assembly, NDH is composed of at least 16 different subunits, 5 of which are encoded in the nucleus.

The protein localises to the plastid. It is found in the chloroplast thylakoid membrane. It carries out the reaction a plastoquinone + NADH + (n+1) H(+)(in) = a plastoquinol + NAD(+) + n H(+)(out). The catalysed reaction is a plastoquinone + NADPH + (n+1) H(+)(in) = a plastoquinol + NADP(+) + n H(+)(out). Its function is as follows. NDH shuttles electrons from NAD(P)H:plastoquinone, via FMN and iron-sulfur (Fe-S) centers, to quinones in the photosynthetic chain and possibly in a chloroplast respiratory chain. The immediate electron acceptor for the enzyme in this species is believed to be plastoquinone. Couples the redox reaction to proton translocation, and thus conserves the redox energy in a proton gradient. In Lemna minor (Common duckweed), this protein is NAD(P)H-quinone oxidoreductase subunit 2 B, chloroplastic.